The following is a 365-amino-acid chain: Putrescine carbamoyltransferase (365 aa).

Carbamoyl phosphate contacts are provided by residues 54–58, Arg-105, and His-132; that span reads STRTR. Putrescine is bound at residue 277 to 280; sequence HCLP.

This sequence belongs to the aspartate/ornithine carbamoyltransferase superfamily. PTCase family. In terms of assembly, homotrimer.

Its subcellular location is the cytoplasm. The catalysed reaction is carbamoyl phosphate + putrescine = N-carbamoylputrescine + phosphate + H(+). It functions in the pathway amine and polyamine biosynthesis; putrescine biosynthesis via agmatine pathway; putrescine from N-carbamoylputrescine (transferase route): step 1/1. Functionally, catalyzes the phosphorolysis of N-carbamoylputrescine to form carbamoyl phosphate and putrescine. Is involved in the degradation pathway of the polyamine agmatine. This chain is Putrescine carbamoyltransferase, found in Mycoplasma capricolum subsp. capricolum (strain California kid / ATCC 27343 / NCTC 10154).